A 357-amino-acid chain; its full sequence is N-acetyl-gamma-glutamyl-phosphate reductase (357 aa).

The active site involves C160.

This sequence belongs to the NAGSA dehydrogenase family. Type 1 subfamily.

The protein resides in the cytoplasm. The catalysed reaction is N-acetyl-L-glutamate 5-semialdehyde + phosphate + NADP(+) = N-acetyl-L-glutamyl 5-phosphate + NADPH + H(+). Its pathway is amino-acid biosynthesis; L-arginine biosynthesis; N(2)-acetyl-L-ornithine from L-glutamate: step 3/4. Catalyzes the NADPH-dependent reduction of N-acetyl-5-glutamyl phosphate to yield N-acetyl-L-glutamate 5-semialdehyde. The sequence is that of N-acetyl-gamma-glutamyl-phosphate reductase from Prochlorococcus marinus (strain MIT 9313).